A 61-amino-acid chain; its full sequence is MDILKKSLFLALFLGLVSISFCDEEKRQDDDESNESEEKKEIHEEGSQEERREKPPPWVPV.

Residues methionine 1 to cysteine 22 form the signal peptide. Positions aspartate 23 to glutamate 53 are excised as a propeptide. The interval glutamate 24–valine 61 is disordered. The segment covering serine 36–proline 55 has biased composition (basic and acidic residues).

In terms of tissue distribution, expressed by the skin glands.

It localises to the secreted. Its function is as follows. The synthetic peptide inhibits bradykinin-induced relaxation of rat tail artery smooth muscle, and also has anti-proliferative effects on the human prostate cancer cell lines LNCaP, PC3 and DU145. This Phyllomedusa sauvagei (Sauvage's leaf frog) protein is Tryptophyllin-1.